Reading from the N-terminus, the 551-residue chain is Probable metalloreductase AIM14 (551 aa).

Transmembrane regions (helical) follow at residues 25–45 (GIII…VKFI), 67–87 (PTWM…GANI), 100–117 (RYGR…YLIL), 138–155 (KWLS…AIGY), 172–192 (FLNF…IVSI), 199–221 (YYSL…IIFH), and 225–247 (GVTI…LRFY). The region spanning 102 to 217 (GRIAYCLLPL…NITAWSMVVL (116 aa)) is the Ferric oxidoreductase domain. The region spanning 247-369 (YKSYPVNNLK…GGSGISFGLP (123 aa)) is the FAD-binding FR-type domain. The interval 440 to 492 (QDESHAKVEQTQGEEEVDGLLNQDENGIPLQSMKKESFPKKEEGEDEEKSSKD) is disordered. Over residues 472–492 (MKKESFPKKEEGEDEEKSSKD) the composition is skewed to basic and acidic residues.

The protein belongs to the ferric reductase (FRE) family. AIM14 subfamily.

It is found in the membrane. In terms of biological role, probable cell surface metalloreductase. May be involved in iron or copper homeostasis. In Candida tropicalis (strain ATCC MYA-3404 / T1) (Yeast), this protein is Probable metalloreductase AIM14 (AIM14).